Reading from the N-terminus, the 465-residue chain is Argininosuccinate lyase (465 aa).

Belongs to the lyase 1 family. Argininosuccinate lyase subfamily.

It is found in the cytoplasm. It carries out the reaction 2-(N(omega)-L-arginino)succinate = fumarate + L-arginine. Its pathway is amino-acid biosynthesis; L-arginine biosynthesis; L-arginine from L-ornithine and carbamoyl phosphate: step 3/3. The sequence is that of Argininosuccinate lyase from Clostridium botulinum (strain Eklund 17B / Type B).